The following is a 357-amino-acid chain: A-type ATP synthase subunit C (357 aa).

This sequence belongs to the V-ATPase V0D/AC39 subunit family. As to quaternary structure, has multiple subunits with at least A(3), B(3), C, D, E, F, H, I and proteolipid K(x).

It localises to the cell membrane. Functionally, component of the A-type ATP synthase that produces ATP from ADP in the presence of a proton gradient across the membrane. The chain is A-type ATP synthase subunit C from Methanococcoides burtonii (strain DSM 6242 / NBRC 107633 / OCM 468 / ACE-M).